A 239-amino-acid chain; its full sequence is Serine protease SplC (239 aa).

An N-terminal signal peptide occupies residues 1–36 (MNKNIVIKSMAALAILTSATGINAAVVEETQQIANA). Active-site charge relay system residues include H75, D113, and S193.

It belongs to the peptidase S1B family.

It is found in the secreted. The sequence is that of Serine protease SplC (splC) from Staphylococcus aureus (strain MSSA476).